We begin with the raw amino-acid sequence, 404 residues long: D-galactonate dehydratase family member PC1_0802 (404 aa).

Residues Asn-37 and His-122 each contribute to the substrate site. Tyr-159 (proton donor/acceptor) is an active-site residue. A Mg(2+)-binding site is contributed by Asp-212. Residue His-214 is the Proton donor/acceptor of the active site. Mg(2+) is bound by residues Glu-238 and Glu-264. Positions 264, 285, 314, 318, and 341 each coordinate substrate.

Belongs to the mandelate racemase/muconate lactonizing enzyme family. GalD subfamily. Requires Mg(2+) as cofactor.

It catalyses the reaction D-mannonate = 2-dehydro-3-deoxy-D-gluconate + H2O. Has low D-mannonate dehydratase activity (in vitro), suggesting that this is not a physiological substrate and that it has no significant role in D-mannonate degradation in vivo. Has no detectable activity with a panel of 70 other acid sugars (in vitro). The chain is D-galactonate dehydratase family member PC1_0802 from Pectobacterium carotovorum subsp. carotovorum (strain PC1).